Consider the following 765-residue polypeptide: Putative U-box domain-containing protein 50 (765 aa).

Residues 198–391 (QEIENYFQQL…NRRIEFCKER (194 aa)) adopt a coiled-coil conformation. The Protein kinase domain maps to 422–765 (SDRLRLKSGG…HSKRAAQASS (344 aa)). Residues 428 to 436 (KSGGNWTNV) and Lys449 each bind ATP. Positions 688-762 (DIPSVFMCPI…QDWHSKRAAQ (75 aa)) constitute a U-box domain.

It belongs to the protein kinase superfamily. Ser/Thr protein kinase family.

It catalyses the reaction S-ubiquitinyl-[E2 ubiquitin-conjugating enzyme]-L-cysteine + [acceptor protein]-L-lysine = [E2 ubiquitin-conjugating enzyme]-L-cysteine + N(6)-ubiquitinyl-[acceptor protein]-L-lysine.. It functions in the pathway protein modification; protein ubiquitination. In terms of biological role, functions as an E3 ubiquitin ligase. The polypeptide is Putative U-box domain-containing protein 50 (PUB50) (Arabidopsis thaliana (Mouse-ear cress)).